We begin with the raw amino-acid sequence, 440 residues long: Tryptophan synthase beta chain (440 aa).

K110 is modified (N6-(pyridoxal phosphate)lysine).

This sequence belongs to the TrpB family. Tetramer of two alpha and two beta chains. Requires pyridoxal 5'-phosphate as cofactor.

It catalyses the reaction (1S,2R)-1-C-(indol-3-yl)glycerol 3-phosphate + L-serine = D-glyceraldehyde 3-phosphate + L-tryptophan + H2O. It functions in the pathway amino-acid biosynthesis; L-tryptophan biosynthesis; L-tryptophan from chorismate: step 5/5. The beta subunit is responsible for the synthesis of L-tryptophan from indole and L-serine. The protein is Tryptophan synthase beta chain of Thermococcus gammatolerans (strain DSM 15229 / JCM 11827 / EJ3).